The primary structure comprises 76 residues: uncharacterized protein (76 aa).

Residues methionine 1–alanine 20 form the signal peptide.

As to expression, prismatic layer of shell (at protein level). Expressed primarily in the mantle with equal levels in the mantle edge and the mantle pallium.

It localises to the secreted. This is an uncharacterized protein from Margaritifera margaritifera (Freshwater pearl mussel).